The following is a 425-amino-acid chain: Glutamate-1-semialdehyde 2,1-aminomutase (425 aa).

At Lys-265 the chain carries N6-(pyridoxal phosphate)lysine.

This sequence belongs to the class-III pyridoxal-phosphate-dependent aminotransferase family. HemL subfamily. Homodimer. Pyridoxal 5'-phosphate is required as a cofactor.

The protein resides in the cytoplasm. The enzyme catalyses (S)-4-amino-5-oxopentanoate = 5-aminolevulinate. Its pathway is porphyrin-containing compound metabolism; protoporphyrin-IX biosynthesis; 5-aminolevulinate from L-glutamyl-tRNA(Glu): step 2/2. This chain is Glutamate-1-semialdehyde 2,1-aminomutase, found in Chromobacterium violaceum (strain ATCC 12472 / DSM 30191 / JCM 1249 / CCUG 213 / NBRC 12614 / NCIMB 9131 / NCTC 9757 / MK).